A 257-amino-acid polypeptide reads, in one-letter code: UPF0246 protein CPS_4102 (257 aa).

The protein belongs to the UPF0246 family.

This is UPF0246 protein CPS_4102 from Colwellia psychrerythraea (strain 34H / ATCC BAA-681) (Vibrio psychroerythus).